A 355-amino-acid polypeptide reads, in one-letter code: S-adenosylmethionine:tRNA ribosyltransferase-isomerase (355 aa).

The protein belongs to the QueA family. Monomer.

The protein resides in the cytoplasm. The catalysed reaction is 7-aminomethyl-7-carbaguanosine(34) in tRNA + S-adenosyl-L-methionine = epoxyqueuosine(34) in tRNA + adenine + L-methionine + 2 H(+). Its pathway is tRNA modification; tRNA-queuosine biosynthesis. Transfers and isomerizes the ribose moiety from AdoMet to the 7-aminomethyl group of 7-deazaguanine (preQ1-tRNA) to give epoxyqueuosine (oQ-tRNA). The chain is S-adenosylmethionine:tRNA ribosyltransferase-isomerase from Burkholderia cenocepacia (strain ATCC BAA-245 / DSM 16553 / LMG 16656 / NCTC 13227 / J2315 / CF5610) (Burkholderia cepacia (strain J2315)).